A 239-amino-acid chain; its full sequence is Serine protease SplF (239 aa).

Positions 1–36 (MNKNIIIKSIGALTILTSITGVGTTMVEGIQQTAKA) are cleaved as a signal peptide. Active-site charge relay system residues include H75, D114, and S192.

This sequence belongs to the peptidase S1B family.

The protein localises to the secreted. The protein is Serine protease SplF (splF) of Staphylococcus aureus (strain USA300).